The sequence spans 386 residues: 1-deoxy-D-xylulose 5-phosphate reductoisomerase (386 aa).

Residues threonine 7, glycine 8, serine 9, isoleucine 10, alanine 33, and asparagine 124 each contribute to the NADPH site. A 1-deoxy-D-xylulose 5-phosphate-binding site is contributed by lysine 125. Residue glutamate 126 coordinates NADPH. Residue aspartate 148 coordinates Mn(2+). Residues serine 149, glutamate 150, serine 174, and histidine 197 each coordinate 1-deoxy-D-xylulose 5-phosphate. Glutamate 150 provides a ligand contact to Mn(2+). Glycine 203 is an NADPH binding site. 4 residues coordinate 1-deoxy-D-xylulose 5-phosphate: serine 210, asparagine 215, lysine 216, and glutamate 219. Glutamate 219 serves as a coordination point for Mn(2+).

The protein belongs to the DXR family. The cofactor is Mg(2+). It depends on Mn(2+) as a cofactor.

It catalyses the reaction 2-C-methyl-D-erythritol 4-phosphate + NADP(+) = 1-deoxy-D-xylulose 5-phosphate + NADPH + H(+). Its pathway is isoprenoid biosynthesis; isopentenyl diphosphate biosynthesis via DXP pathway; isopentenyl diphosphate from 1-deoxy-D-xylulose 5-phosphate: step 1/6. In terms of biological role, catalyzes the NADPH-dependent rearrangement and reduction of 1-deoxy-D-xylulose-5-phosphate (DXP) to 2-C-methyl-D-erythritol 4-phosphate (MEP). The polypeptide is 1-deoxy-D-xylulose 5-phosphate reductoisomerase (Kitasatospora griseola (Streptomyces griseolosporeus)).